The chain runs to 687 residues: Ribosomal RNA processing protein 1 homolog (687 aa).

Over residues 288 to 298 (DEEDDEVNAEE) the composition is skewed to acidic residues. Disordered stretches follow at residues 288-312 (DEED…RAGN) and 463-624 (VKEA…GSGK). 3 stretches are compositionally biased toward basic and acidic residues: residues 463-488 (VKEA…DQTK), 497-520 (PKND…EEPA), and 527-543 (HSKT…DEQP). Residues 554–564 (KAKPTPKTKAA) show a composition bias toward low complexity. The segment covering 596 to 608 (KQANSKLPQSTPK) has biased composition (polar residues). Phosphothreonine is present on residues threonine 617 and threonine 620. Phosphoserine is present on serine 622.

It belongs to the RRP1 family.

It is found in the nucleus. Functionally, may be involved in the generation of 28S rRNA. The sequence is that of Ribosomal RNA processing protein 1 homolog (Nnp-1) from Drosophila melanogaster (Fruit fly).